The sequence spans 548 residues: SH2/SH3 adapter protein dreadlocks (548 aa).

Disordered stretches follow at residues 12–37, 57–92, and 113–146; these read IPDS…QHQN, QVPV…TASS, and GSGS…MKHG. The span at 20 to 37 shows a compositional bias: low complexity; that stretch reads QQYPQQQQHPPQLPQHQN. The span at 113-122 shows a compositional bias: gly residues; sequence GSGSANGSGS. Residues 123–135 show a composition bias toward low complexity; sequence GNSSSGSAAGNAG. Residues 150–209 form the SH3 1 domain; that stretch reads DDVCYVVAKYDYAAQGAQELDLRKNERYLLLDDSKHWWRVQNSRNQSGYVPSNYVKKEKP. The tract at residues 219-247 is disordered; it reads VKKGSGSKTLPNCSPSRQVESPTMSRRLP. Residues 227-242 show a composition bias toward polar residues; sequence TLPNCSPSRQVESPTM. 2 consecutive SH3 domains span residues 252–311 and 324–386; these read EAIG…EDCD and NVLD…ELND. The segment at 398–442 is disordered; that stretch reads SAGNGNGGGSNGGAGGGGGNDSMERRNEGNKPAAQSSGQPIERPN. Residues 401-417 are compositionally biased toward gly residues; it reads NGNGGGSNGGAGGGGGN. In terms of domain architecture, SH2 spans 448–542; it reads WYYGAITRSQ…GEKLYLVRSL (95 aa).

Interacts (via SH2 and SH3 domains) with Dscam1 (via cytoplasmic domain); the interaction is direct and requires Dscam1 to be phosphorylated. Interacts (via SH2 and SH3 domains) with InR/Insulin-like receptor (via C-terminal cytoplasmic region); the interaction requires InR kinase activity, probably for autophosphorylation stimulated by insulin signaling. Interacts with Ptp61F (via C-terminus); this interaction is independent of insulin stimulation. Interacts (via SH3 domain 2) with Pak (via N-terminal PXXP motif). In terms of processing, phosphorylated by Src42A and possibly by other tyrosine kinases. Constitutively dephosphorylated by its binding partner Ptp61F.

The protein resides in the perikaryon. Its subcellular location is the cell projection. The protein localises to the axon. It is found in the growth cone. Its function is as follows. Adapter protein that links cell surface receptor tyrosine phosphorylation to downstream signaling pathways and effectors, many of which are involved in regulation of the actin cytoskeleton. Recruited by Dscam1/Down syndrome cell adhesion molecule homolog and InR/insulin-like receptor. Recruits Pak to membranes, probably when dock/dreadlocks is associated with activated receptors. Required for guidance and targeting of photoreceptor (R cell) axon projections but not for axon outgrowth, differentiation or target induction in the developing eye. As part of a signaling pathway that involves the lbm/late bloomer protein, involved in synapse formation of the RP3 motorneuron at the muscle 7/6 cleft, probably by stimulating axon defasciculation from other SNb neurons. The polypeptide is SH2/SH3 adapter protein dreadlocks (Drosophila melanogaster (Fruit fly)).